Consider the following 236-residue polypeptide: Cysteine-rich venom protein TRI1 (236 aa).

Positions 1–18 (MIVFILLSLAAVLEQSFG) are cleaved as a signal peptide. Positions 37–165 (VDRHNSFRRS…GYSYFYVCQY (129 aa)) constitute an SCP domain. 8 cysteine pairs are disulfide-bonded: C74-C152, C91-C166, C147-C163, C185-C192, C188-C197, C201-C234, C210-C228, and C219-C232. In terms of domain architecture, ShKT spans 201–234 (CLREDKFTNCKSLVQQNSCQHDWTRKNCPATCFC).

It belongs to the CRISP family. In terms of tissue distribution, expressed by the venom gland.

It is found in the secreted. Functionally, blocks contraction of smooth muscle elicited by high potassium-induced depolarization, but does not block caffeine-stimulated contraction. May target voltage-gated calcium channels on smooth muscle. This chain is Cysteine-rich venom protein TRI1, found in Trimorphodon biscutatus (Western lyre snake).